An 893-amino-acid chain; its full sequence is Valine--tRNA ligase (893 aa).

The 'HIGH' region motif lies at 57–67 (PNVTGTLHMGH). The 'KMSKS' region motif lies at 545–549 (KMSKS). An ATP-binding site is contributed by lysine 548. Positions 821–855 (TSGSVDLEAERKRLEKDLAAAQKELATTEGKLGNE) form a coiled coil.

Belongs to the class-I aminoacyl-tRNA synthetase family. ValS type 1 subfamily. In terms of assembly, monomer.

The protein resides in the cytoplasm. It catalyses the reaction tRNA(Val) + L-valine + ATP = L-valyl-tRNA(Val) + AMP + diphosphate. In terms of biological role, catalyzes the attachment of valine to tRNA(Val). As ValRS can inadvertently accommodate and process structurally similar amino acids such as threonine, to avoid such errors, it has a 'posttransfer' editing activity that hydrolyzes mischarged Thr-tRNA(Val) in a tRNA-dependent manner. The protein is Valine--tRNA ligase of Nocardia farcinica (strain IFM 10152).